A 232-amino-acid polypeptide reads, in one-letter code: Cytidylate kinase (232 aa).

The disordered stretch occupies residues 1–21 (MSEDTPLVVAMDGPSGTGKSS). An ATP-binding site is contributed by 13 to 21 (GPSGTGKSS).

The protein belongs to the cytidylate kinase family. Type 1 subfamily.

The protein localises to the cytoplasm. It catalyses the reaction CMP + ATP = CDP + ADP. The enzyme catalyses dCMP + ATP = dCDP + ADP. This is Cytidylate kinase from Nocardia farcinica (strain IFM 10152).